A 537-amino-acid polypeptide reads, in one-letter code: CTP synthase (537 aa).

The amidoligase domain stretch occupies residues methionine 1 to leucine 265. Serine 13 is a binding site for CTP. Serine 13 is a binding site for UTP. Residue glycine 14–isoleucine 19 coordinates ATP. Tyrosine 54 is a binding site for L-glutamine. Aspartate 71 contacts ATP. Residues aspartate 71 and glutamate 139 each coordinate Mg(2+). CTP contacts are provided by residues aspartate 146–glutamate 148, lysine 186–glutamine 191, and lysine 222. Residues lysine 186–glutamine 191 and lysine 222 each bind UTP. The Glutamine amidotransferase type-1 domain maps to glutamate 290–glutamate 532. Residue glycine 351 coordinates L-glutamine. Catalysis depends on cysteine 378, which acts as the Nucleophile; for glutamine hydrolysis. L-glutamine is bound by residues phenylalanine 379–glutamine 382, glutamate 402, and arginine 459. Catalysis depends on residues histidine 505 and glutamate 507.

Belongs to the CTP synthase family. As to quaternary structure, homotetramer.

The catalysed reaction is UTP + L-glutamine + ATP + H2O = CTP + L-glutamate + ADP + phosphate + 2 H(+). The enzyme catalyses L-glutamine + H2O = L-glutamate + NH4(+). It catalyses the reaction UTP + NH4(+) + ATP = CTP + ADP + phosphate + 2 H(+). The protein operates within pyrimidine metabolism; CTP biosynthesis via de novo pathway; CTP from UDP: step 2/2. With respect to regulation, allosterically activated by GTP, when glutamine is the substrate; GTP has no effect on the reaction when ammonia is the substrate. The allosteric effector GTP functions by stabilizing the protein conformation that binds the tetrahedral intermediate(s) formed during glutamine hydrolysis. Inhibited by the product CTP, via allosteric rather than competitive inhibition. Functionally, catalyzes the ATP-dependent amination of UTP to CTP with either L-glutamine or ammonia as the source of nitrogen. Regulates intracellular CTP levels through interactions with the four ribonucleotide triphosphates. The protein is CTP synthase of Pyrococcus horikoshii (strain ATCC 700860 / DSM 12428 / JCM 9974 / NBRC 100139 / OT-3).